Reading from the N-terminus, the 461-residue chain is MSRINKNVVLALLTLTSSAFLLFQLYYYKHYLSTKNGAGLSKSKGSRIGFDSTQWRAVKKFIMLTSNQNVPVFLIDPLILELINKNFEQVKNTSHGSTSQCKFFCVPRDFTAFALQYHLWKNEEGWFRIAENMGFQCLKIESKDPRLDGIDSLSGTEIPLHYICKLATHAIHLVVFHERSGNYLWHGHLRLKEHIDRKFVPFRKLQFGRYPGAFDRPELQQVTVDGLEVLIPKDPMHFVEEVPHSRFIECRYKEARAFFQQYLDDNTVEAVAFRKSAKELLQLAAKTLNKLGVPFWLSSGTCLGWYRQCNIIPYSKDVDLGIFIQDYKSDIILAFQDAGLPLKHKFGKVEDSLELSFQGKDDVKLDVFFFYEETDHMWNGGTQAKTGKKFKYLFPKFTLCWTEFVDMKVHVPCETLEYIEANYGKTWKIPVKTWDWKRSPPNVQPNGIWPISEWDEVIQLY.

Over 1-7 (MSRINKN) the chain is Cytoplasmic. Positions 6–27 (KNVVLALLTLTSSAFLLFQLYY) are required and sufficient for interaction with POMGNT1. The helical; Signal-anchor for type II membrane protein transmembrane segment at 8–28 (VVLALLTLTSSAFLLFQLYYY) threads the bilayer. Residues 29-461 (KHYLSTKNGA…SEWDEVIQLY (433 aa)) are Lumenal-facing. The N-linked (GlcNAc...) asparagine glycan is linked to asparagine 92.

The protein belongs to the LicD transferase family. Forms a complex composed of FKTN/fukutin, FKRP and RXYLT1/TMEM5. Interacts (via transmembrane domain) with POMGNT1; the interaction is direct and is required for normal POMGNT1 location in Golgi membranes. Expressed in the retina (at protein level). Widely expressed with highest expression in brain, heart, pancreas and skeletal muscle. Expressed at similar levels in control fetal and adult brain. Expressed in migrating neurons, including Cajar-Retzius cells and adult cortical neurons, as well as hippocampal pyramidal cells and cerebellar Purkinje cells. No expression observed in the glia limitans, the subpial astrocytes (which contribute to basement membrane formation) or other glial cells.

Its subcellular location is the golgi apparatus membrane. The protein resides in the cytoplasm. It localises to the nucleus. It catalyses the reaction 3-O-[beta-D-GalNAc-(1-&gt;3)-beta-D-GlcNAc-(1-&gt;4)-(O-6-P-alpha-D-Man)]-Thr-[protein] + CDP-L-ribitol = 3-O-[Rib-ol-P-3-beta-D-GalNAc-(1-&gt;3)-beta-D-GlcNAc-(1-&gt;4)-(O-6-P-alpha-D-Man)]-Thr-[protein] + CMP + H(+). Its pathway is protein modification; protein glycosylation. Catalyzes the transfer of a ribitol-phosphate from CDP-ribitol to the distal N-acetylgalactosamine of the phosphorylated O-mannosyl trisaccharide (N-acetylgalactosamine-beta-3-N-acetylglucosamine-beta-4-(phosphate-6-)mannose), a carbohydrate structure present in alpha-dystroglycan (DAG1). This constitutes the first step in the formation of the ribitol 5-phosphate tandem repeat which links the phosphorylated O-mannosyl trisaccharide to the ligand binding moiety composed of repeats of 3-xylosyl-alpha-1,3-glucuronic acid-beta-1. Required for normal location of POMGNT1 in Golgi membranes, and for normal POMGNT1 activity. May interact with and reinforce a large complex encompassing the outside and inside of muscle membranes. Could be involved in brain development. The chain is Ribitol-5-phosphate transferase FKTN from Homo sapiens (Human).